A 277-amino-acid polypeptide reads, in one-letter code: Elongation factor Ts (277 aa).

An involved in Mg(2+) ion dislocation from EF-Tu region spans residues 81–84; the sequence is TDFV.

This sequence belongs to the EF-Ts family.

The protein localises to the cytoplasm. Functionally, associates with the EF-Tu.GDP complex and induces the exchange of GDP to GTP. It remains bound to the aminoacyl-tRNA.EF-Tu.GTP complex up to the GTP hydrolysis stage on the ribosome. The sequence is that of Elongation factor Ts from Amoebophilus asiaticus (strain 5a2).